The sequence spans 3131 residues: Intermembrane lipid transfer protein vps1302 (3131 aa).

Residues 2–115 (LEGLLANFLN…VLESKRRQMQ (114 aa)) form the Chorein N-terminal domain. A compositionally biased stretch (basic and acidic residues) spans 774–801 (DGKASDDDDNGDWRPESSESLDSHESEY). The interval 774–807 (DGKASDDDDNGDWRPESSESLDSHESEYKLNNTP) is disordered. The 279-residue stretch at 2085–2363 (KVMIYPPYVI…NYSWDFPILK (279 aa)) folds into the SHR-BD domain.

Belongs to the VPS13 family.

It is found in the golgi apparatus. The protein localises to the trans-Golgi network. Mediates the transfer of lipids between membranes at organelle contact sites. May play a role in mitochondrial lipid homeostasis, Golgi vesicle transport, reticulophagy, actin cytoskeleton organization and formation of the forespore membrane. This is Intermembrane lipid transfer protein vps1302 from Schizosaccharomyces pombe (strain 972 / ATCC 24843) (Fission yeast).